Here is a 145-residue protein sequence, read N- to C-terminus: Large ribosomal subunit protein uL16 (145 aa).

Belongs to the universal ribosomal protein uL16 family. As to quaternary structure, part of the 50S ribosomal subunit.

Functionally, binds 23S rRNA and is also seen to make contacts with the A and possibly P site tRNAs. The protein is Large ribosomal subunit protein uL16 of Exiguobacterium sibiricum (strain DSM 17290 / CCUG 55495 / CIP 109462 / JCM 13490 / 255-15).